The sequence spans 376 residues: Protein-glutamate methylesterase/protein-glutamine glutaminase (376 aa).

The Response regulatory domain occupies 5–122; sequence KVLIVDDSAL…QHTFEDYTDE (118 aa). D56 is subject to 4-aspartylphosphate. Positions 185 to 376 constitute a CheB-type methylesterase domain; that stretch reads SKPSHKVIAL…PEKILALIKK (192 aa). Residues S197, H223, and D319 contribute to the active site.

The protein belongs to the CheB family. In terms of processing, phosphorylated by CheA. Phosphorylation of the N-terminal regulatory domain activates the methylesterase activity.

The protein localises to the cytoplasm. It carries out the reaction [protein]-L-glutamate 5-O-methyl ester + H2O = L-glutamyl-[protein] + methanol + H(+). It catalyses the reaction L-glutaminyl-[protein] + H2O = L-glutamyl-[protein] + NH4(+). Its function is as follows. Involved in chemotaxis. Part of a chemotaxis signal transduction system that modulates chemotaxis in response to various stimuli. Catalyzes the demethylation of specific methylglutamate residues introduced into the chemoreceptors (methyl-accepting chemotaxis proteins or MCP) by CheR. Also mediates the irreversible deamidation of specific glutamine residues to glutamic acid. This chain is Protein-glutamate methylesterase/protein-glutamine glutaminase, found in Hydrogenovibrio crunogenus (strain DSM 25203 / XCL-2) (Thiomicrospira crunogena).